Reading from the N-terminus, the 209-residue chain is MTEIKLNYHKTHFLTSAPDIRHLPEDSGVEIAFAGRSNAGKSTALNALTNQKNLARTSKTPGRTQLINLFEVEPNCKLVDLPGYGYAAVPEQVKLQWQRSLGEYLQKRECLRGVVILMDIRHPLKDLDQQMIEWAVSAELPVLLLLTKADKLSQSARSKTVKMVREAILPFQGDVQVEAYSALNRIGIDKLATKLDSWFAEIFTQTQEG.

Residues S27–E201 form the EngB-type G domain. Residues G35–S42, G62–L66, D80–G83, T147–D150, and Y180–A182 each bind GTP. Mg(2+)-binding residues include S42 and T64.

The protein belongs to the TRAFAC class TrmE-Era-EngA-EngB-Septin-like GTPase superfamily. EngB GTPase family. Requires Mg(2+) as cofactor.

Its function is as follows. Necessary for normal cell division and for the maintenance of normal septation. The sequence is that of Probable GTP-binding protein EngB from Glaesserella parasuis serovar 5 (strain SH0165) (Haemophilus parasuis).